Reading from the N-terminus, the 460-residue chain is Nuclear transport factor 2 (460 aa).

One can recognise an NTF2 domain in the interval 15-131; that stretch reads VGRAFVEQYY…YFVLNDVFRF (117 aa). Disordered stretches follow at residues 207–226, 238–289, and 361–460; these read EPPT…GDAP, KSSP…VDVE, and RQAV…GGSS. The 78-residue stretch at 293 to 370 folds into the RRM domain; the sequence is HSIYVRNLPF…RQAVVEEKKT (78 aa). The segment covering 373 to 382 has biased composition (gly residues); it reads RGGGNNGGSR. Residues 383 to 394 are compositionally biased toward low complexity; sequence GRYFSGRGSFRN. Composition is skewed to gly residues over residues 399–416 and 450–460; these read GGRG…GGEF and GRGGARGGGSS.

In terms of assembly, interacts with MBD6.

Its subcellular location is the cytoplasm. It localises to the nucleus. Functionally, involved in RNA-directed DNA methylation (RdDM). This chain is Nuclear transport factor 2, found in Arabidopsis thaliana (Mouse-ear cress).